A 703-amino-acid polypeptide reads, in one-letter code: Methionine--tRNA ligase (703 aa).

The 'HIGH' region signature appears at 12-22; the sequence is PYANGPLHIGH. Cys143, Cys146, Cys156, and Cys159 together coordinate Zn(2+). Positions 331 to 335 match the 'KMSKS' region motif; it reads KMSKT. Lys334 serves as a coordination point for ATP. Low complexity-rich tracts occupy residues 556 to 568 and 577 to 594; these read AAPQAAEARPAKG and EAPAATQAAAPSAGAAES. Disordered stretches follow at residues 556-594 and 682-703; these read AAPQAAEARPAKGAKTEKKPAEAPAATQAAAPSAGAAES and GPGGKELSLLDPGDVAPGSEVK. The 102-residue stretch at 602–703 folds into the tRNA-binding domain; that stretch reads DFAKVVLKAG…GDVAPGSEVK (102 aa).

It belongs to the class-I aminoacyl-tRNA synthetase family. MetG type 1 subfamily. Homodimer. Zn(2+) is required as a cofactor.

Its subcellular location is the cytoplasm. The catalysed reaction is tRNA(Met) + L-methionine + ATP = L-methionyl-tRNA(Met) + AMP + diphosphate. In terms of biological role, is required not only for elongation of protein synthesis but also for the initiation of all mRNA translation through initiator tRNA(fMet) aminoacylation. This is Methionine--tRNA ligase from Myxococcus xanthus (strain DK1622).